The following is a 405-amino-acid chain: Glutamate-pyruvate aminotransferase AlaA (405 aa).

Gly41 and Asn179 together coordinate L-alanine. N6-(pyridoxal phosphate)lysine is present on Lys240. Arg378 is an L-alanine binding site.

This sequence belongs to the class-I pyridoxal-phosphate-dependent aminotransferase family. As to quaternary structure, homodimer. It depends on pyridoxal 5'-phosphate as a cofactor.

Its subcellular location is the cytoplasm. It catalyses the reaction L-alanine + 2-oxoglutarate = pyruvate + L-glutamate. The protein operates within amino-acid biosynthesis; L-alanine biosynthesis. In terms of biological role, involved in the biosynthesis of alanine. Catalyzes the transamination of pyruvate by glutamate, leading to the formation of L-alanine and 2-oxoglutarate. Is also able to catalyze the reverse reaction. This chain is Glutamate-pyruvate aminotransferase AlaA, found in Escherichia coli (strain K12).